Reading from the N-terminus, the 289-residue chain is Cuticle collagen 19 (289 aa).

The signal sequence occupies residues 1–18 (MGKLIVVGSCGVLVCVLA). The disordered stretch occupies residues 95–289 (SEGCPAGPPG…PCPSRAAYKA (195 aa)). Triple-helical region regions lie at residues 101–130 (GPPGPPGEGGQKGNPGHDGDDGKPGAPGVI) and 147–269 (GRPG…KGED). A compositionally biased stretch (gly residues) spans 162–183 (GPAGGNGRRGPPGPVGGPGEQG). Low complexity-rich tracts occupy residues 184-207 (PQGDAGRPGAAGRPGPAGPRGEPG) and 223-239 (PRGETGPAGNPGAPGND).

The protein belongs to the cuticular collagen family. As to quaternary structure, collagen polypeptide chains are complexed within the cuticle by disulfide bonds and other types of covalent cross-links.

Functionally, nematode cuticles are composed largely of collagen-like proteins. The cuticle functions both as an exoskeleton and as a barrier to protect the worm from its environment. The protein is Cuticle collagen 19 (col-19) of Caenorhabditis elegans.